Here is a 433-residue protein sequence, read N- to C-terminus: Glucoside xylosyltransferase 1 (433 aa).

Residues 1 to 6 are Cytoplasmic-facing; the sequence is MRRFAR. A helical; Signal-anchor for type II membrane protein transmembrane segment spans residues 7-29; it reads VALLFLGCGVCSLLYGVSQLALS. The Lumenal segment spans residues 30-433; that stretch reads LEQEAGGARQ…DLSVRRSKGS (404 aa). A disordered region spans residues 39–64; that stretch reads QRQARESAAPGGGRQAGSADGGEEGA. Residues N69, N166, N271, N305, and N380 are each glycosylated (N-linked (GlcNAc...) asparagine).

The protein belongs to the glycosyltransferase 8 family.

It is found in the membrane. The catalysed reaction is 3-O-(beta-D-glucosyl)-L-seryl-[EGF-like domain protein] + UDP-alpha-D-xylose = 3-O-[alpha-D-xylosyl-(1-&gt;3)-beta-D-glucosyl]-L-seryl-[EGF-like domain protein] + UDP + H(+). Glycosyltransferase which elongates the O-linked glucose attached to EGF-like repeats in the extracellular domain of Notch proteins by catalyzing the addition of xylose. The chain is Glucoside xylosyltransferase 1 (GXYLT1) from Gallus gallus (Chicken).